We begin with the raw amino-acid sequence, 374 residues long: Ribosomal RNA large subunit methyltransferase G (374 aa).

Belongs to the methyltransferase superfamily. RlmG family.

It localises to the cytoplasm. The enzyme catalyses guanosine(1835) in 23S rRNA + S-adenosyl-L-methionine = N(2)-methylguanosine(1835) in 23S rRNA + S-adenosyl-L-homocysteine + H(+). Specifically methylates the guanine in position 1835 (m2G1835) of 23S rRNA. In Pseudomonas putida (strain ATCC 47054 / DSM 6125 / CFBP 8728 / NCIMB 11950 / KT2440), this protein is Ribosomal RNA large subunit methyltransferase G.